Reading from the N-terminus, the 610-residue chain is Dihydroxy-acid dehydratase (610 aa).

Aspartate 81 contacts Mg(2+). A [2Fe-2S] cluster-binding site is contributed by cysteine 122. Mg(2+)-binding residues include aspartate 123 and lysine 124. An N6-carboxylysine modification is found at lysine 124. Residue cysteine 196 coordinates [2Fe-2S] cluster. Glutamate 492 serves as a coordination point for Mg(2+). The Proton acceptor role is filled by serine 518.

It belongs to the IlvD/Edd family. As to quaternary structure, homodimer. It depends on [2Fe-2S] cluster as a cofactor. The cofactor is Mg(2+).

The catalysed reaction is (2R)-2,3-dihydroxy-3-methylbutanoate = 3-methyl-2-oxobutanoate + H2O. It catalyses the reaction (2R,3R)-2,3-dihydroxy-3-methylpentanoate = (S)-3-methyl-2-oxopentanoate + H2O. The protein operates within amino-acid biosynthesis; L-isoleucine biosynthesis; L-isoleucine from 2-oxobutanoate: step 3/4. It functions in the pathway amino-acid biosynthesis; L-valine biosynthesis; L-valine from pyruvate: step 3/4. Functions in the biosynthesis of branched-chain amino acids. Catalyzes the dehydration of (2R,3R)-2,3-dihydroxy-3-methylpentanoate (2,3-dihydroxy-3-methylvalerate) into 2-oxo-3-methylpentanoate (2-oxo-3-methylvalerate) and of (2R)-2,3-dihydroxy-3-methylbutanoate (2,3-dihydroxyisovalerate) into 2-oxo-3-methylbutanoate (2-oxoisovalerate), the penultimate precursor to L-isoleucine and L-valine, respectively. The protein is Dihydroxy-acid dehydratase of Ruegeria pomeroyi (strain ATCC 700808 / DSM 15171 / DSS-3) (Silicibacter pomeroyi).